The chain runs to 807 residues: MSGIEEKCNESSYSADSIKVLKGLEAVRKRPGMYIGDVGDGSGLHHMIYEVVDNSIDEALAGYCDLIRVTLNKNGSVTVSDNGRGIPVEIHEEEGISAAEVIMTQLHAGGKFDQHSYKISGGLHGVGVSVVNALSEWLELRIWRNNKEYFIRFNNGITEAPLSIVKENIDKKGTEVTFFPSVGIFTNIEFDFVTIEHRLRELAFLNSGVKILLIDNRFEEVKKVEFFYTGGIEAYVQYIDRAKHAIHPCIVVNTEHVESGISLELAIHWNDSYHENILCFTNNIRQRDGGTHLSAFKSAITRVITSYLDTTGLNKKTKHDFSGEDTREGICCVLSVKVPDPKFSSQTKDKLVSSEVRPVVENAVYTKVLEWFEEHPIEAKAIIAKIMEAANAREAARKARELTRRKSALEVSNLPGKLADCHAKDPAISELFIVEGDSAGGTAKQGRDSKIQAILPLRGKILNVERARFDKMLSSEQIGTLITALGISVEREFSLEKLRYHKVIIMTDADVDGSHIRTLLLTFFYRHMPELINKGYLYIAQPPLYKVKSGASELYLKNEQALQNYLIKSTINDTKLILDGQEQLIGYNLEDLINKVVQFNCLLDRASKKFNRSITEILAINDLFNKKIFEPESGSRLQKALDVLNNLEESPDKTNLQVLKHENRIEFFHFSRGLKNTKILLKEQLELFEFVEISQFALSIFDIFSKRLKLIVKGKEFDVVTPSQLLNTIIECGKKGITIQRFKGLGEMNSDQLWDTTLDPTKRTLLQVRVSEVDEAEGIFSTLMGDVVEPRRLFIQANALNVMNLDI.

In terms of domain architecture, Toprim spans 429–543 (SELFIVEGDS…KGYLYIAQPP (115 aa)). Residues Glu-435, Asp-508, and Asp-510 each contribute to the Mg(2+) site.

This sequence belongs to the type II topoisomerase GyrB family. Heterotetramer, composed of two GyrA and two GyrB chains. In the heterotetramer, GyrA contains the active site tyrosine that forms a transient covalent intermediate with DNA, while GyrB binds cofactors and catalyzes ATP hydrolysis. The cofactor is Mg(2+). Mn(2+) is required as a cofactor. Ca(2+) serves as cofactor.

The protein resides in the cytoplasm. The catalysed reaction is ATP-dependent breakage, passage and rejoining of double-stranded DNA.. Functionally, a type II topoisomerase that negatively supercoils closed circular double-stranded (ds) DNA in an ATP-dependent manner to modulate DNA topology and maintain chromosomes in an underwound state. Negative supercoiling favors strand separation, and DNA replication, transcription, recombination and repair, all of which involve strand separation. Also able to catalyze the interconversion of other topological isomers of dsDNA rings, including catenanes and knotted rings. Type II topoisomerases break and join 2 DNA strands simultaneously in an ATP-dependent manner. This Rickettsia typhi (strain ATCC VR-144 / Wilmington) protein is DNA gyrase subunit B.